We begin with the raw amino-acid sequence, 513 residues long: Putative ATP-dependent RNA helicase QP509L (513 aa).

In terms of domain architecture, Helicase ATP-binding spans 110-262 (KKLLSPYGRF…KIIIHHLGQP (153 aa)). An ATP-binding site is contributed by 123–130 (LNTGLGKT). A DEAH box motif is present at residues 215–218 (DEAH).

It belongs to the DEAD box helicase family. DEAH subfamily.

The enzyme catalyses ATP + H2O = ADP + phosphate + H(+). This is Putative ATP-dependent RNA helicase QP509L from African swine fever virus (isolate Tick/South Africa/Pretoriuskop Pr4/1996) (ASFV).